A 429-amino-acid polypeptide reads, in one-letter code: Serine--tRNA ligase (429 aa).

236 to 238 contributes to the L-serine binding site; the sequence is TAE. 267–269 contacts ATP; it reads RSE. L-serine is bound at residue E290. 354-357 contacts ATP; that stretch reads EISS. S390 contacts L-serine.

This sequence belongs to the class-II aminoacyl-tRNA synthetase family. Type-1 seryl-tRNA synthetase subfamily. Homodimer. The tRNA molecule binds across the dimer.

It is found in the cytoplasm. It catalyses the reaction tRNA(Ser) + L-serine + ATP = L-seryl-tRNA(Ser) + AMP + diphosphate + H(+). The enzyme catalyses tRNA(Sec) + L-serine + ATP = L-seryl-tRNA(Sec) + AMP + diphosphate + H(+). It functions in the pathway aminoacyl-tRNA biosynthesis; selenocysteinyl-tRNA(Sec) biosynthesis; L-seryl-tRNA(Sec) from L-serine and tRNA(Sec): step 1/1. In terms of biological role, catalyzes the attachment of serine to tRNA(Ser). Is also able to aminoacylate tRNA(Sec) with serine, to form the misacylated tRNA L-seryl-tRNA(Sec), which will be further converted into selenocysteinyl-tRNA(Sec). This Alcanivorax borkumensis (strain ATCC 700651 / DSM 11573 / NCIMB 13689 / SK2) protein is Serine--tRNA ligase.